A 119-amino-acid polypeptide reads, in one-letter code: Chorion class CA protein ERA.1 (119 aa).

The signal sequence occupies residues 1-21 (MSTFAVLLLCVQACLIQNVYS). A left arm region spans residues 22–55 (QCLGRVGPGGPPLGPYGGPLGGPGYGPVGYGGCG). Residues 56 to 103 (GYGGSGIGNVAVAGELPVAGSTGVMGQVPVIGAVEFAGPACAVGSVSI) are central domain. Residues 104–119 (SGACGPTCGCGGSPYY) are right arm.

Belongs to the chorion protein family.

Functionally, this protein is one of many from the eggshell of the silk moth. In Bombyx mori (Silk moth), this protein is Chorion class CA protein ERA.1 (ERA.1).